Reading from the N-terminus, the 507-residue chain is Bifunctional purine biosynthesis protein PurH (507 aa).

The 149-residue stretch at 1 to 149 (MSESKRIKTA…KNYNDVIIVA (149 aa)) folds into the MGS-like domain.

This sequence belongs to the PurH family.

It carries out the reaction (6R)-10-formyltetrahydrofolate + 5-amino-1-(5-phospho-beta-D-ribosyl)imidazole-4-carboxamide = 5-formamido-1-(5-phospho-D-ribosyl)imidazole-4-carboxamide + (6S)-5,6,7,8-tetrahydrofolate. The enzyme catalyses IMP + H2O = 5-formamido-1-(5-phospho-D-ribosyl)imidazole-4-carboxamide. Its pathway is purine metabolism; IMP biosynthesis via de novo pathway; 5-formamido-1-(5-phospho-D-ribosyl)imidazole-4-carboxamide from 5-amino-1-(5-phospho-D-ribosyl)imidazole-4-carboxamide (10-formyl THF route): step 1/1. The protein operates within purine metabolism; IMP biosynthesis via de novo pathway; IMP from 5-formamido-1-(5-phospho-D-ribosyl)imidazole-4-carboxamide: step 1/1. The sequence is that of Bifunctional purine biosynthesis protein PurH from Bacteroides thetaiotaomicron (strain ATCC 29148 / DSM 2079 / JCM 5827 / CCUG 10774 / NCTC 10582 / VPI-5482 / E50).